The following is a 162-amino-acid chain: Large ribosomal subunit protein bL17 (162 aa).

Residues 118-162 are disordered; the sequence is RAPAAAPEAEEKGEKKAAGKAEKAPKAAKAPKAEKKPAKKAAKAE. Residues 126–162 show a composition bias toward basic and acidic residues; the sequence is AEEKGEKKAAGKAEKAPKAAKAPKAEKKPAKKAAKAE.

It belongs to the bacterial ribosomal protein bL17 family. Part of the 50S ribosomal subunit. Contacts protein L32.

This is Large ribosomal subunit protein bL17 from Anaeromyxobacter dehalogenans (strain 2CP-C).